Consider the following 203-residue polypeptide: Corrinoid adenosyltransferase (203 aa).

Residues 1–21 (MNESPEKDQRHRERMERKKAV) are disordered. Residue 41–47 (GNGKGKS) participates in ATP binding.

It belongs to the Cob(I)alamin adenosyltransferase family. Monomer. Requires Mn(2+) as cofactor.

The protein resides in the cytoplasm. The enzyme catalyses 2 cob(II)yrinate a,c diamide + reduced [electron-transfer flavoprotein] + 2 ATP = 2 adenosylcob(III)yrinate a,c-diamide + 2 triphosphate + oxidized [electron-transfer flavoprotein] + 3 H(+). The catalysed reaction is 2 cob(II)alamin + reduced [electron-transfer flavoprotein] + 2 ATP = 2 adenosylcob(III)alamin + 2 triphosphate + oxidized [electron-transfer flavoprotein] + 3 H(+). The protein operates within cofactor biosynthesis; adenosylcobalamin biosynthesis; adenosylcobalamin from cob(II)yrinate a,c-diamide: step 2/7. Required for both de novo synthesis of the corrin ring for the assimilation of exogenous corrinoids. Participates in the adenosylation of a variety of incomplete and complete corrinoids. The sequence is that of Corrinoid adenosyltransferase (cobO) from Pseudomonas aeruginosa (strain ATCC 15692 / DSM 22644 / CIP 104116 / JCM 14847 / LMG 12228 / 1C / PRS 101 / PAO1).